Reading from the N-terminus, the 225-residue chain is MPIEQRGDASVVTHALARDELTRIRNVETEQVAFRKGLVRLGRICGYEIIDGRMETEYTEVQTPLTTTMGERVKGLEDVVIVNVLRAATPFVEGLLKAFPRARQGVISASRDEEAGMNDDGEFPISVEYVKLPEITEDDTVIIADPMLATGSTMATVLDYITSEKTEPENLLVLAAVSAPEGIVRVSEAQPDADIISVAIDDELDEDGFIVPGLGDAGDRAFRTT.

Residue 36–40 (KGLVR) coordinates GTP. 5-phospho-alpha-D-ribose 1-diphosphate-binding positions include R86, R111, and 145–153 (DPMLATGST). Residues I210 and 215 to 217 (GDA) each bind uracil. Position 216 (D216) interacts with 5-phospho-alpha-D-ribose 1-diphosphate.

The protein belongs to the UPRTase family. Requires Mg(2+) as cofactor.

It catalyses the reaction UMP + diphosphate = 5-phospho-alpha-D-ribose 1-diphosphate + uracil. Its pathway is pyrimidine metabolism; UMP biosynthesis via salvage pathway; UMP from uracil: step 1/1. With respect to regulation, allosterically activated by GTP. Its function is as follows. Catalyzes the conversion of uracil and 5-phospho-alpha-D-ribose 1-diphosphate (PRPP) to UMP and diphosphate. In Haloarcula marismortui (strain ATCC 43049 / DSM 3752 / JCM 8966 / VKM B-1809) (Halobacterium marismortui), this protein is Uracil phosphoribosyltransferase.